Consider the following 361-residue polypeptide: Riboflavin biosynthesis protein RibD (361 aa).

In terms of domain architecture, CMP/dCMP-type deaminase spans Met1 to Arg122. A deaminase region spans residues Met1–Gly144. Residue His49 coordinates Zn(2+). Glu51 functions as the Proton donor in the catalytic mechanism. Zn(2+) is bound by residues Cys74 and Cys83. The reductase stretch occupies residues Leu145 to Glu361. An NADP(+)-binding site is contributed by Ala153. Ser167 contributes to the substrate binding site. Trp169 contacts NADP(+). Arg183 contacts substrate. Residues Thr195 and Asp199 each coordinate NADP(+). Leu203 and Arg206 together coordinate substrate. Thr221 contributes to the NADP(+) binding site. Glu290 serves as a coordination point for substrate. Position 292–298 (Gly292–Ser298) interacts with NADP(+).

The protein in the N-terminal section; belongs to the cytidine and deoxycytidylate deaminase family. It in the C-terminal section; belongs to the HTP reductase family. As to quaternary structure, homotetramer. Zn(2+) is required as a cofactor.

It carries out the reaction 2,5-diamino-6-hydroxy-4-(5-phosphoribosylamino)-pyrimidine + H2O + H(+) = 5-amino-6-(5-phospho-D-ribosylamino)uracil + NH4(+). It catalyses the reaction 5-amino-6-(5-phospho-D-ribitylamino)uracil + NADP(+) = 5-amino-6-(5-phospho-D-ribosylamino)uracil + NADPH + H(+). It participates in cofactor biosynthesis; riboflavin biosynthesis; 5-amino-6-(D-ribitylamino)uracil from GTP: step 2/4. The protein operates within cofactor biosynthesis; riboflavin biosynthesis; 5-amino-6-(D-ribitylamino)uracil from GTP: step 3/4. Converts 2,5-diamino-6-(ribosylamino)-4(3h)-pyrimidinone 5'-phosphate into 5-amino-6-(ribosylamino)-2,4(1h,3h)-pyrimidinedione 5'-phosphate. This is Riboflavin biosynthesis protein RibD (ribD) from Bacillus subtilis (strain 168).